Here is a 793-residue protein sequence, read N- to C-terminus: MAFNGYGIFDSDPRKNPSSDLRTQFWLAFLLGASACVFFCFFRKRWKVLYAPRTTIEGLNLPTLSSSYYKWLMDLVNIPDDVVQNCAGLDGYVFLLFFKMGIKFLSFASLLGVLIIMPVNKHFRGDAFGNITLSMPAKSEYFFSSPLVKKSIVQSPIIANGSELNVGVLGPSLFNPIGNLSDIPGLPQPGDGFLYLYVLFTYFISIFLLYVLFSSTKSIADIRQSYLARQNRLTDRTVFISGLPNELCSTENLKAYFDKLDVGSIDSLSICRNYSYMDILLSKKSKYVKKLEKYWSIYLSNCKKLGISTLPPSNYLSPNRAELESTPEQLLEVPWQHHQCHPLIKTHFFGIFGQKIDAIDFYSAKLYKISQQIENARSFDYPTTGQAFITFESMATAQIVAQTHIDSKSLMGLHIELAPAANDIQWHNTYIGRWHKFFQGWFITLVTFMIILLWTVPVGAIAVFINLDTIRRLWPELGRMIEDLPFLNSLLRTFLPTLVYSLFISISPFLFRWLSSMQGLSSRAEEEIYAVGKNYAYLFVNFFLVYVIAGSTSIWELAKDTTSFAHFLANRLPHQAQFFIDLIVLQGIGMFPLKLIQLGKLSSYFVRRSFVPYSIASKKFETPDSFSVGIFLPQPMFIMLICLCYSIISPLILVFGLIYFIIGFLVYKYELIYQMEHPQHSTGELWSTIFLRMIFGCVIMQLTMMGLMSLRKAYWLSTVIFPLLCFTVISAYNFSTMIRSSMQFVSLYYIRTHQSNTLSSESESRNSESSGSYVHPGFDLSNEELPLIDLNTA.

The Lumenal segment spans residues 1–21 (MAFNGYGIFDSDPRKNPSSDL). Residues 22-42 (RTQFWLAFLLGASACVFFCFF) traverse the membrane as a helical segment. The Cytoplasmic portion of the chain corresponds to 43 to 95 (RKRWKVLYAPRTTIEGLNLPTLSSSYYKWLMDLVNIPDDVVQNCAGLDGYVFL). A helical membrane pass occupies residues 96–116 (LFFKMGIKFLSFASLLGVLII). Residues 117–192 (MPVNKHFRGD…IPGLPQPGDG (76 aa)) are Lumenal-facing. Residues 193 to 213 (FLYLYVLFTYFISIFLLYVLF) traverse the membrane as a helical segment. The Cytoplasmic portion of the chain corresponds to 214 to 444 (SSTKSIADIR…HKFFQGWFIT (231 aa)). A helical membrane pass occupies residues 445–465 (LVTFMIILLWTVPVGAIAVFI). At 466-493 (NLDTIRRLWPELGRMIEDLPFLNSLLRT) the chain is on the lumenal side. Residues 494-514 (FLPTLVYSLFISISPFLFRWL) traverse the membrane as a helical segment. Residues 515-534 (SSMQGLSSRAEEEIYAVGKN) lie on the Cytoplasmic side of the membrane. The helical transmembrane segment at 535-555 (YAYLFVNFFLVYVIAGSTSIW) threads the bilayer. Over 556 to 577 (ELAKDTTSFAHFLANRLPHQAQ) the chain is Lumenal. The helical transmembrane segment at 578-598 (FFIDLIVLQGIGMFPLKLIQL) threads the bilayer. At 599-646 (GKLSSYFVRRSFVPYSIASKKFETPDSFSVGIFLPQPMFIMLICLCYS) the chain is on the cytoplasmic side. A helical transmembrane segment spans residues 647–667 (IISPLILVFGLIYFIIGFLVY). Topologically, residues 668–687 (KYELIYQMEHPQHSTGELWS) are lumenal. A helical membrane pass occupies residues 688 to 708 (TIFLRMIFGCVIMQLTMMGLM). Residues 709–713 (SLRKA) are Cytoplasmic-facing. Residues 714–734 (YWLSTVIFPLLCFTVISAYNF) form a helical membrane-spanning segment. Residues 735 to 793 (STMIRSSMQFVSLYYIRTHQSNTLSSESESRNSESSGSYVHPGFDLSNEELPLIDLNTA) are Lumenal-facing. A disordered region spans residues 759–778 (SSESESRNSESSGSYVHPGF).

The protein belongs to the CSC1 (TC 1.A.17) family.

It is found in the vacuole membrane. In terms of biological role, acts as an osmosensitive calcium-permeable cation channel. This is Calcium permeable stress-gated cation channel 1 from Schizosaccharomyces pombe (strain 972 / ATCC 24843) (Fission yeast).